The sequence spans 500 residues: Cytochrome P450 11B3, mitochondrial (500 aa).

A mitochondrion-targeting transit peptide spans 1 to 24; sequence MALRVTADVWLARPWQCLHRTRAL. Cysteine 447 is a heme binding site.

Belongs to the cytochrome P450 family. The cofactor is heme. Expressed in the adrenal cortex and in different brain tissues, including hippocampus, hypothalamus, cerebellum, cerebral cortex, and midbrain.

It localises to the mitochondrion membrane. The catalysed reaction is a steroid + 2 reduced [adrenodoxin] + O2 + 2 H(+) = an 11beta-hydroxysteroid + 2 oxidized [adrenodoxin] + H2O. It carries out the reaction 21-hydroxyprogesterone + 2 reduced [adrenodoxin] + O2 + 2 H(+) = corticosterone + 2 oxidized [adrenodoxin] + H2O. The enzyme catalyses 21-hydroxyprogesterone + 2 reduced [adrenodoxin] + O2 + 2 H(+) = 18-hydroxy-11-deoxycorticosterone + 2 oxidized [adrenodoxin] + H2O. It catalyses the reaction 21-hydroxyprogesterone + 2 reduced [adrenodoxin] + O2 + 2 H(+) = 19-hydroxy-11-deoxycorticosterone + 2 oxidized [adrenodoxin] + H2O. Functionally, a cytochrome P450 monooxygenase involved in the biosynthesis of adrenal corticoids. Catalyzes the hydroxylation of steroids at 11beta, 18- or 19-positions, with preferred regioselectivity at 11beta and 18. Converts 11-deoxycorticosterone into corticosterone, 18-hydroxy-11-deoxycorticosterone, and/or 19-hydroxy-11-deoxycorticosterone, but not to 18-hydroxycorticosterone or aldosterone. Mechanistically, uses molecular oxygen inserting one oxygen atom into a substrate for hydroxylation and reducing the second into a water molecule. Two electrons are provided by NADPH via a two-protein mitochondrial transfer system comprising flavoprotein FDXR (adrenodoxin/ferredoxin reductase) and nonheme iron-sulfur protein FDX1 or FDX2 (adrenodoxin/ferredoxin). The protein is Cytochrome P450 11B3, mitochondrial (Cyp11b3) of Rattus norvegicus (Rat).